The primary structure comprises 89 residues: MALEADVKKAIIDEYATHPGDTGSPEVQIALLTKRITGLTEHLKEHKHDHHTRRGLLLLVGQRRRLLGYLSNVDIERYRALIARLGIRR.

It belongs to the universal ribosomal protein uS15 family. As to quaternary structure, part of the 30S ribosomal subunit. Forms a bridge to the 50S subunit in the 70S ribosome, contacting the 23S rRNA.

Its function is as follows. One of the primary rRNA binding proteins, it binds directly to 16S rRNA where it helps nucleate assembly of the platform of the 30S subunit by binding and bridging several RNA helices of the 16S rRNA. Forms an intersubunit bridge (bridge B4) with the 23S rRNA of the 50S subunit in the ribosome. This chain is Small ribosomal subunit protein uS15, found in Clavibacter michiganensis subsp. michiganensis (strain NCPPB 382).